We begin with the raw amino-acid sequence, 230 residues long: Large ribosomal subunit protein uL1 (230 aa).

Belongs to the universal ribosomal protein uL1 family. As to quaternary structure, part of the 50S ribosomal subunit.

In terms of biological role, binds directly to 23S rRNA. The L1 stalk is quite mobile in the ribosome, and is involved in E site tRNA release. Its function is as follows. Protein L1 is also a translational repressor protein, it controls the translation of the L11 operon by binding to its mRNA. The sequence is that of Large ribosomal subunit protein uL1 from Nitrosomonas europaea (strain ATCC 19718 / CIP 103999 / KCTC 2705 / NBRC 14298).